A 34-amino-acid polypeptide reads, in one-letter code: Small ribosomal subunit protein uS2c (34 aa).

This sequence belongs to the universal ribosomal protein uS2 family.

The protein localises to the plastid. It is found in the chloroplast. In Ochrosphaera neapolitana, this protein is Small ribosomal subunit protein uS2c (rps2).